The sequence spans 462 residues: UDP-N-acetylmuramoylalanine--D-glutamate ligase (462 aa).

Glycine 109 to threonine 115 serves as a coordination point for ATP.

This sequence belongs to the MurCDEF family.

It is found in the cytoplasm. The enzyme catalyses UDP-N-acetyl-alpha-D-muramoyl-L-alanine + D-glutamate + ATP = UDP-N-acetyl-alpha-D-muramoyl-L-alanyl-D-glutamate + ADP + phosphate + H(+). It participates in cell wall biogenesis; peptidoglycan biosynthesis. Functionally, cell wall formation. Catalyzes the addition of glutamate to the nucleotide precursor UDP-N-acetylmuramoyl-L-alanine (UMA). This chain is UDP-N-acetylmuramoylalanine--D-glutamate ligase, found in Leptospira borgpetersenii serovar Hardjo-bovis (strain JB197).